Consider the following 119-residue polypeptide: Basic phospholipase A2 homolog 1 (119 aa).

Disulfide bonds link Cys-11–Cys-72, Cys-27–Cys-118, Cys-29–Cys-45, Cys-44–Cys-99, Cys-51–Cys-92, Cys-61–Cys-85, and Cys-79–Cys-90. The interval 107 to 117 (KENYNIDPKKR) is important for membrane-damaging activities in eukaryotes and bacteria; heparin-binding.

It belongs to the phospholipase A2 family. Group I subfamily. D49 sub-subfamily. In terms of tissue distribution, expressed by the venom gland.

The protein localises to the secreted. This chain is Basic phospholipase A2 homolog 1, found in Notechis scutatus scutatus (Mainland tiger snake).